A 932-amino-acid chain; its full sequence is MKDSHSSRRKYEKEKLVFATNNGKRTEGTPAFLKSGNTASSSSPTLQFRPTSRYPTLSHEPVYTNVLDLSSRIDANRASIMSATMGTPPSALKFSKKKISRPVVSEDTFKDKLPRATIPVKPEPQPQYKIPAAPAPTSKRVVNRGLKLNTNLRQASPILPSPSLKLDRQDAPIQINHEQKEDFLVSIPRPTPMTNLDDGKDEIGQPDPHRKYMAPPRVNSISRVQRRMSYIPYGGFDDFLDNYYKDDDTVLEDNQLKSNSRIETLEEEDGAESDSITNTVSNASSDAEPAHRHLGPVYENSGHLPSKSHFSSTDSNTDSFGLESDERSLPSVSNDLKSSETLKNPRNDDLLTLQQPPRYPHSQMVMLPARSPVEVPAPTFDRRNVSRNSNNNSPEGYDNNRTNPTVNNLPSYPTNLARPKAIKPMPTSIHGQTSPLSPIPPVHTTHGLVSDIRPLPSVSSPIMRADSTPISHNLAVTPSFSPIPQQSNKSIGNHKNTSVANVSSKVANSKFERNISMMSNSNASSPAIFEVGAEAKEKTKDAIPCHPDDKLMIPSPKIVTHGDAMQEEQRLRQKSQITPDDEVELAKVYLNALETLENKPSLAPDQASYNTRINVYRTRAVELLKKNAYPSKTQNTVPEALFLIGQFHSQGVLGFRRDLGKAFELYSLAAKKGHPLSNYRVAVCLQTGTGVKPDTSKCVAIYKKAAEMDVVEAMFRIALIYLNGLLGQKRNISLGVQWLERACKSKGPESVRAMYELAKIYEQPDRYGVSATPERKFELYKQSAVYGYAAAQCKLGECYEHGLLGCLAEPRRSIFWYTRAAEQDYGEAELGLSGWYLTGSEGILPKNGEEALLWAHKAACKGLAKAQYAVGFMMEQGIGVAADPSSAHNWYIRAAKQGFPKAKKRLEEQALSSKQTHSKAPKKKQQEQCVVM.

Over residues 1 to 16 (MKDSHSSRRKYEKEKL) the composition is skewed to basic and acidic residues. 3 disordered regions span residues 1-53 (MKDS…PTSR), 264-356 (TLEE…LQQP), and 374-406 (EVPAPTFDRRNVSRNSNNNSPEGYDNNRTNPTV). Composition is skewed to polar residues over residues 35–53 (SGNTASSSSPTLQFRPTSR), 274–285 (DSITNTVSNASS), and 308–319 (SHFSSTDSNTDS). A compositionally biased stretch (basic and acidic residues) spans 337–349 (KSSETLKNPRNDD). The residue at position 393 (Ser393) is a Phosphoserine. Sel1-like repeat units lie at residues 638–674 (PEALFLIGQFHSQGVLGFRRDLGKAFELYSLAAKKGH), 675–710 (PLSNYRVAVCLQTGTGVKPDTSKCVAIYKKAAEMDV), 711–747 (VEAMFRIALIYLNGLLGQKRNISLGVQWLERACKSKG), 751–788 (VRAMYELAKIYEQPDRYGVSATPERKFELYKQSAVYGY), 789–825 (AAAQCKLGECYEHGLLGCLAEPRRSIFWYTRAAEQDY), 826–863 (GEAELGLSGWYLTGSEGILPKNGEEALLWAHKAACKGL), and 864–899 (AKAQYAVGFMMEQGIGVAADPSSAHNWYIRAAKQGF). The disordered stretch occupies residues 905–932 (RLEEQALSSKQTHSKAPKKKQQEQCVVM).

This is Chitin synthase regulatory factor 3 (chr3) from Schizosaccharomyces pombe (strain 972 / ATCC 24843) (Fission yeast).